Consider the following 132-residue polypeptide: Cytochrome c' (132 aa).

Heme c contacts are provided by R10, Q11, D65, C122, C125, and H126.

Binds 1 heme c group covalently per subunit.

Functionally, cytochrome c' is the most widely occurring bacterial c-type cytochrome. Cytochromes c' are high-spin proteins and the heme has no sixth ligand. Their exact function is not known. This chain is Cytochrome c', found in Halomonas halodenitrificans (strain ATCC 12084 / NCIMB 8669) (Paracoccus halodenitrificans).